The sequence spans 258 residues: MGKYNFTALRVRQTALRQHAAGKIRAPPKWLDVVADIPPAQVLVRNQAPQHQLVRQRVKTLPGTSKPQVVFEVQEKRIKPKKASRMFLPTEIKYEEDQLRQEFFRDHPWELARPRVLVESTGKDSEHYDWSRLQQPGKRLDGESVVQRQLWLLNNVPDMTKSAAYDIARCEFYRLRLQEDIERRVAAEEAEATGATFGPSLLEVGMELENQEYERWKAWAKMEAQLLDQKTAAFTGAPEIAAADDAVEELEEKVPVPV.

The protein belongs to the mitochondrion-specific ribosomal protein mS23 family. Component of the mitochondrial small ribosomal subunit.

The protein resides in the mitochondrion. In Aspergillus fumigatus (strain ATCC MYA-4609 / CBS 101355 / FGSC A1100 / Af293) (Neosartorya fumigata), this protein is Small ribosomal subunit protein mS23 (rsm25).